Reading from the N-terminus, the 421-residue chain is NADH-quinone oxidoreductase subunit F (421 aa).

54–63 (GRGGAGFSTG) serves as a coordination point for NAD(+). FMN is bound at residue 166-213 (GAGAYICGEETALLESLEGKKGMPRLKPPFPAGFGLYGCPTTINNVES). [4Fe-4S] cluster is bound by residues C344, C347, C350, and C390.

The protein belongs to the complex I 51 kDa subunit family. FMN serves as cofactor. Requires [4Fe-4S] cluster as cofactor.

The enzyme catalyses a quinone + NADH + 5 H(+)(in) = a quinol + NAD(+) + 4 H(+)(out). NDH-1 shuttles electrons from NADH, via FMN and iron-sulfur (Fe-S) centers, to quinones in the respiratory chain. Couples the redox reaction to proton translocation (for every two electrons transferred, four hydrogen ions are translocated across the cytoplasmic membrane), and thus conserves the redox energy in a proton gradient. This is NADH-quinone oxidoreductase subunit F (nuoF) from Rickettsia rickettsii (strain Sheila Smith).